We begin with the raw amino-acid sequence, 336 residues long: Porphobilinogen deaminase (336 aa).

At Cys251 the chain carries S-(dipyrrolylmethanemethyl)cysteine. Ser327 and Ser329 each carry phosphoserine.

The protein belongs to the HMBS family. Requires dipyrromethane as cofactor.

The catalysed reaction is 4 porphobilinogen + H2O = hydroxymethylbilane + 4 NH4(+). Its pathway is porphyrin-containing compound metabolism; protoporphyrin-IX biosynthesis; coproporphyrinogen-III from 5-aminolevulinate: step 2/4. Its function is as follows. Tetrapolymerization of the monopyrrole PBG into the hydroxymethylbilane pre-uroporphyrinogen in several discrete steps. In Schizosaccharomyces pombe (strain 972 / ATCC 24843) (Fission yeast), this protein is Porphobilinogen deaminase (hem3).